The following is a 299-amino-acid chain: Regucalcin (299 aa).

Position 18 (Glu18) interacts with a divalent metal cation. Substrate contacts are provided by Arg101, Asn103, and Glu121. The residue at position 144 (Lys144) is an N6-succinyllysine. A divalent metal cation is bound by residues Asn154 and Asp204. The Proton donor/acceptor role is filled by Asp204. An N6-succinyllysine mark is found at Lys244 and Lys253. Ser268 bears the Phosphoserine mark.

The protein belongs to the SMP-30/CGR1 family. In terms of assembly, monomer. It depends on Zn(2+) as a cofactor. Mn(2+) serves as cofactor. The cofactor is Ca(2+). Mg(2+) is required as a cofactor. Requires Co(2+) as cofactor. The N-terminus is blocked. In terms of tissue distribution, detected in liver (at protein level). Hepatocytes and renal proximal tubular epithelium.

The protein resides in the cytoplasm. It catalyses the reaction D-glucono-1,5-lactone + H2O = D-gluconate + H(+). It participates in cofactor biosynthesis; L-ascorbate biosynthesis via UDP-alpha-D-glucuronate pathway; L-ascorbate from UDP-alpha-D-glucuronate: step 3/4. Its function is as follows. Gluconolactonase with low activity towards other sugar lactones, including gulonolactone and galactonolactone. Catalyzes a key step in ascorbic acid (vitamin C) biosynthesis. Can also hydrolyze diisopropyl phosphorofluoridate and phenylacetate (in vitro). Calcium-binding protein. Modulates Ca(2+) signaling, and Ca(2+)-dependent cellular processes and enzyme activities. This chain is Regucalcin (Rgn), found in Rattus norvegicus (Rat).